Consider the following 642-residue polypeptide: 4-hydroxy-3-methylbut-2-enyl diphosphate reductase (642 aa).

Positions 1-282 (MRKVMLAEKA…EEAISKMSEN (282 aa)) are 4-hydroxy-3-methylbut-2-enyl diphosphate reductase. Cys-13 contacts [4Fe-4S] cluster. (2E)-4-hydroxy-3-methylbut-2-enyl diphosphate-binding residues include His-42 and His-77. The dimethylallyl diphosphate site is built by His-42 and His-77. The isopentenyl diphosphate site is built by His-42 and His-77. Cys-99 contacts [4Fe-4S] cluster. His-127 provides a ligand contact to (2E)-4-hydroxy-3-methylbut-2-enyl diphosphate. His-127 provides a ligand contact to dimethylallyl diphosphate. His-127 provides a ligand contact to isopentenyl diphosphate. The Proton donor role is filled by Glu-129. Thr-165 contributes to the (2E)-4-hydroxy-3-methylbut-2-enyl diphosphate binding site. Cys-193 is a [4Fe-4S] cluster binding site. The (2E)-4-hydroxy-3-methylbut-2-enyl diphosphate site is built by Ser-221, Ser-222, Asn-223, and Ser-266. Dimethylallyl diphosphate-binding residues include Ser-221, Ser-222, Asn-223, and Ser-266. Isopentenyl diphosphate-binding residues include Ser-221, Ser-222, Asn-223, and Ser-266. 3 consecutive S1 motif domains span residues 309–377 (GASV…LSVK), 484–552 (GQVV…LSVK), and 569–638 (GSVV…LSIR).

In the N-terminal section; belongs to the IspH family. Requires [4Fe-4S] cluster as cofactor.

The catalysed reaction is isopentenyl diphosphate + 2 oxidized [2Fe-2S]-[ferredoxin] + H2O = (2E)-4-hydroxy-3-methylbut-2-enyl diphosphate + 2 reduced [2Fe-2S]-[ferredoxin] + 2 H(+). The enzyme catalyses dimethylallyl diphosphate + 2 oxidized [2Fe-2S]-[ferredoxin] + H2O = (2E)-4-hydroxy-3-methylbut-2-enyl diphosphate + 2 reduced [2Fe-2S]-[ferredoxin] + 2 H(+). It functions in the pathway isoprenoid biosynthesis; dimethylallyl diphosphate biosynthesis; dimethylallyl diphosphate from (2E)-4-hydroxy-3-methylbutenyl diphosphate: step 1/1. It participates in isoprenoid biosynthesis; isopentenyl diphosphate biosynthesis via DXP pathway; isopentenyl diphosphate from 1-deoxy-D-xylulose 5-phosphate: step 6/6. Catalyzes the conversion of 1-hydroxy-2-methyl-2-(E)-butenyl 4-diphosphate (HMBPP) into a mixture of isopentenyl diphosphate (IPP) and dimethylallyl diphosphate (DMAPP). Acts in the terminal step of the DOXP/MEP pathway for isoprenoid precursor biosynthesis. This Clostridium acetobutylicum (strain ATCC 824 / DSM 792 / JCM 1419 / IAM 19013 / LMG 5710 / NBRC 13948 / NRRL B-527 / VKM B-1787 / 2291 / W) protein is 4-hydroxy-3-methylbut-2-enyl diphosphate reductase.